Here is a 452-residue protein sequence, read N- to C-terminus: Bifunctional protein GlmU (452 aa).

The segment at 1–226 (MNFSAVILAA…PIEVEGVNDR (226 aa)) is pyrophosphorylase. UDP-N-acetyl-alpha-D-glucosamine is bound by residues 8-11 (LAAG), lysine 22, glutamine 73, 78-79 (GT), 100-102 (YGD), glycine 137, glutamate 151, asparagine 166, and asparagine 224. Aspartate 102 is a binding site for Mg(2+). Asparagine 224 lines the Mg(2+) pocket. Positions 227 to 247 (AQLARLERAYQAAQAQKLLEQ) are linker. Residues 248 to 452 (GVMLRDPSRF…IANWQRPTKK (205 aa)) form an N-acetyltransferase region. Positions 330 and 348 each coordinate UDP-N-acetyl-alpha-D-glucosamine. Histidine 360 acts as the Proton acceptor in catalysis. Residues tyrosine 363 and asparagine 374 each contribute to the UDP-N-acetyl-alpha-D-glucosamine site. Residues alanine 377, 383 to 384 (NY), serine 402, alanine 420, and arginine 437 contribute to the acetyl-CoA site.

It in the N-terminal section; belongs to the N-acetylglucosamine-1-phosphate uridyltransferase family. The protein in the C-terminal section; belongs to the transferase hexapeptide repeat family. In terms of assembly, homotrimer. The cofactor is Mg(2+).

It localises to the cytoplasm. The catalysed reaction is alpha-D-glucosamine 1-phosphate + acetyl-CoA = N-acetyl-alpha-D-glucosamine 1-phosphate + CoA + H(+). It catalyses the reaction N-acetyl-alpha-D-glucosamine 1-phosphate + UTP + H(+) = UDP-N-acetyl-alpha-D-glucosamine + diphosphate. The protein operates within nucleotide-sugar biosynthesis; UDP-N-acetyl-alpha-D-glucosamine biosynthesis; N-acetyl-alpha-D-glucosamine 1-phosphate from alpha-D-glucosamine 6-phosphate (route II): step 2/2. It functions in the pathway nucleotide-sugar biosynthesis; UDP-N-acetyl-alpha-D-glucosamine biosynthesis; UDP-N-acetyl-alpha-D-glucosamine from N-acetyl-alpha-D-glucosamine 1-phosphate: step 1/1. It participates in bacterial outer membrane biogenesis; LPS lipid A biosynthesis. Catalyzes the last two sequential reactions in the de novo biosynthetic pathway for UDP-N-acetylglucosamine (UDP-GlcNAc). The C-terminal domain catalyzes the transfer of acetyl group from acetyl coenzyme A to glucosamine-1-phosphate (GlcN-1-P) to produce N-acetylglucosamine-1-phosphate (GlcNAc-1-P), which is converted into UDP-GlcNAc by the transfer of uridine 5-monophosphate (from uridine 5-triphosphate), a reaction catalyzed by the N-terminal domain. In Aliivibrio fischeri (strain ATCC 700601 / ES114) (Vibrio fischeri), this protein is Bifunctional protein GlmU.